Consider the following 397-residue polypeptide: Elongation factor Tu (397 aa).

Residues 10 to 207 form the tr-type G domain; it reads LPHVNVGTIG…TLDSYIPEPE (198 aa). Positions 19 to 26 are G1; that stretch reads GHVDHGKT. Residue 19–26 coordinates GTP; the sequence is GHVDHGKT. Residue Thr26 coordinates Mg(2+). The segment at 60–64 is G2; it reads GITIN. The G3 stretch occupies residues 81-84; the sequence is DCPG. GTP-binding positions include 81 to 85 and 136 to 139; these read DCPGH and NKAD. The interval 136–139 is G4; the sequence is NKAD. The tract at residues 174-176 is G5; the sequence is SAR.

Belongs to the TRAFAC class translation factor GTPase superfamily. Classic translation factor GTPase family. EF-Tu/EF-1A subfamily. Monomer.

It is found in the cytoplasm. It catalyses the reaction GTP + H2O = GDP + phosphate + H(+). GTP hydrolase that promotes the GTP-dependent binding of aminoacyl-tRNA to the A-site of ribosomes during protein biosynthesis. The chain is Elongation factor Tu from Pseudomonas fluorescens (strain Pf0-1).